The chain runs to 754 residues: uncharacterized protein (754 aa).

Active-site charge relay system residues include Ser585 and His707. A disordered region spans residues 733-754; it reads SHAPPPSRKARSAARRSTDPVR.

The protein belongs to the peptidase S9A family.

This is an uncharacterized protein from Sinorhizobium fredii (strain NBRC 101917 / NGR234).